Here is a 153-residue protein sequence, read N- to C-terminus: MQLTELIETTVTGLGYELVDLERTGRGMVCVYIDQPAGITIDDCEKVTRQLQHVLTVENIDYERLEVSSPGLDRPLKKLADFTRFAGSEAVITLKKPLDGRKTYRGILHAPNGETIGLEFERKKGEAAMLDFTLADIDKARLIPHVDFRSRKQ.

This sequence belongs to the RimP family.

Its subcellular location is the cytoplasm. Required for maturation of 30S ribosomal subunits. The polypeptide is Ribosome maturation factor RimP (Burkholderia mallei (strain NCTC 10229)).